A 552-amino-acid chain; its full sequence is Serine protease 53 (552 aa).

Residues 1–23 form the signal peptide; that stretch reads MRQSWRPELLIVGAVVVIEGLQA. Peptidase S1 domains follow at residues 24 to 273 and 294 to 525; these read AQRA…AHVH and VACG…NLDW. The disordered stretch occupies residues 27 to 46; sequence ACGQRGPGPPEPQEGNTLPG. The cysteines at positions 62 and 78 are disulfide-linked. Catalysis depends on charge relay system residues histidine 77 and aspartate 128. 4 cysteine pairs are disulfide-bonded: cysteine 158–cysteine 230, cysteine 187–cysteine 209, cysteine 220–cysteine 249, and cysteine 326–cysteine 342. Catalysis depends on charge relay system residues serine 224, histidine 341, and aspartate 382. Cystine bridges form between cysteine 443–cysteine 463 and cysteine 473–cysteine 501. The active-site Charge relay system is the serine 477.

This sequence belongs to the peptidase S1 family.

It is found in the secreted. Functionally, in vitro can degrade the fibrinogen alpha chain of as well as pro-urokinase-type plasminogen activator. In Mus musculus (Mouse), this protein is Serine protease 53 (Prss53).